A 388-amino-acid chain; its full sequence is Alanine racemase (388 aa).

Lysine 44 acts as the Proton acceptor; specific for D-alanine in catalysis. Residue lysine 44 is modified to N6-(pyridoxal phosphate)lysine. Arginine 142 provides a ligand contact to substrate. Tyrosine 273 (proton acceptor; specific for L-alanine) is an active-site residue. Methionine 321 contacts substrate.

It belongs to the alanine racemase family. Pyridoxal 5'-phosphate is required as a cofactor.

It catalyses the reaction L-alanine = D-alanine. It functions in the pathway amino-acid biosynthesis; D-alanine biosynthesis; D-alanine from L-alanine: step 1/1. In terms of biological role, catalyzes the interconversion of L-alanine and D-alanine. May also act on other amino acids. In Mycobacterium leprae (strain TN), this protein is Alanine racemase (alr).